Here is a 200-residue protein sequence, read N- to C-terminus: CASP-like protein 1D2 (200 aa).

Residues 1 to 26 (MASTENPDPETGKSEPIPASATTPPP) form a disordered region. Residues 1-36 (MASTENPDPETGKSEPIPASATTPPPSAASFLDCRK) lie on the Cytoplasmic side of the membrane. The chain crosses the membrane as a helical span at residues 37 to 57 (IDVIIRVLLFSATLTALIVMV). At 58–85 (TSDQTEKTQLPGVSSPAPVSAEFNDSPA) the chain is on the extracellular side. The helical transmembrane segment at 86–106 (FIFFVVALVVTSFYALMSTLV) threads the bilayer. At 107–129 (SISLLLKPEFTARVSVYLASLDM) the chain is on the cytoplasmic side. The helical transmembrane segment at 130–150 (VMLGILASATGTAGGVAYIAL) threads the bilayer. Topologically, residues 151 to 171 (KGNKEVGWNKICNVYDKFCRY) are extracellular. Residues 172–192 (IATSLALSLFATLLLLVLSIC) traverse the membrane as a helical segment. Over 193 to 200 (SALSKRTP) the chain is Cytoplasmic.

Belongs to the Casparian strip membrane proteins (CASP) family. In terms of assembly, homodimer and heterodimers.

It localises to the cell membrane. This Arabidopsis lyrata subsp. lyrata (Lyre-leaved rock-cress) protein is CASP-like protein 1D2.